Here is a 125-residue protein sequence, read N- to C-terminus: Large ribosomal subunit protein eL22 (125 aa).

This sequence belongs to the eukaryotic ribosomal protein eL22 family. Component of the large ribosomal subunit.

The protein localises to the cytoplasm. Its function is as follows. Component of the large ribosomal subunit. The ribosome is a large ribonucleoprotein complex responsible for the synthesis of proteins in the cell. This is Large ribosomal subunit protein eL22 (rpl22) from Gadus morhua (Atlantic cod).